The primary structure comprises 112 residues: UPF0060 membrane protein XOO1694 (112 aa).

4 consecutive transmembrane segments (helical) span residues 8-28 (LLLF…PYLW), 32-52 (GGSV…VWLL), 62-82 (VYAA…LWWV), and 92-112 (LLGA…PRSA).

This sequence belongs to the UPF0060 family.

The protein localises to the cell inner membrane. The polypeptide is UPF0060 membrane protein XOO1694 (Xanthomonas oryzae pv. oryzae (strain MAFF 311018)).